We begin with the raw amino-acid sequence, 94 residues long: Integration host factor subunit beta (94 aa).

This sequence belongs to the bacterial histone-like protein family. As to quaternary structure, heterodimer of an alpha and a beta chain.

Functionally, this protein is one of the two subunits of integration host factor, a specific DNA-binding protein that functions in genetic recombination as well as in transcriptional and translational control. The polypeptide is Integration host factor subunit beta (Mesorhizobium japonicum (strain LMG 29417 / CECT 9101 / MAFF 303099) (Mesorhizobium loti (strain MAFF 303099))).